The chain runs to 431 residues: Hydroxylamine reductase (431 aa).

4 residues coordinate [4Fe-4S] cluster: Cys-5, Cys-8, Cys-17, and Cys-23. Hybrid [4Fe-2O-2S] cluster contacts are provided by His-131, Glu-155, Cys-199, Cys-286, Cys-314, Cys-339, Glu-373, and Lys-375. Cys-286 is subject to Cysteine persulfide.

It belongs to the HCP family. [4Fe-4S] cluster serves as cofactor. It depends on hybrid [4Fe-2O-2S] cluster as a cofactor.

The protein resides in the cytoplasm. It catalyses the reaction A + NH4(+) + H2O = hydroxylamine + AH2 + H(+). Functionally, catalyzes the reduction of hydroxylamine to form NH(3) and H(2)O. This is Hydroxylamine reductase from Thermotoga maritima (strain ATCC 43589 / DSM 3109 / JCM 10099 / NBRC 100826 / MSB8).